The primary structure comprises 113 residues: U11-theraphotoxin-Hhn1a (113 aa).

An N-terminal signal peptide occupies residues 1–21; that stretch reads MNTVRVTFLLVFVLAVSLGQA. Positions 22 to 74 are excised as a propeptide; the sequence is DKDENRMEMQEKTEQGKSYLDFAENLLLQKLEELEAKLLEEDSEESRNSRQRR. Positions 61–83 are disordered; that stretch reads EEDSEESRNSRQRRCIGEGVPCD. 3 disulfide bridges follow: C75–C90, C82–C95, and C89–C110.

The protein belongs to the neurotoxin 14 (magi-1) family. 01 (HNTX-16) subfamily. Expressed by the venom gland.

It localises to the secreted. Probable ion channel inhibitor. The chain is U11-theraphotoxin-Hhn1a from Cyriopagopus hainanus (Chinese bird spider).